A 236-amino-acid polypeptide reads, in one-letter code: Large ribosomal subunit protein uL1 (236 aa).

This sequence belongs to the universal ribosomal protein uL1 family. As to quaternary structure, part of the 50S ribosomal subunit.

Functionally, binds directly to 23S rRNA. The L1 stalk is quite mobile in the ribosome, and is involved in E site tRNA release. In terms of biological role, protein L1 is also a translational repressor protein, it controls the translation of the L11 operon by binding to its mRNA. This Heliobacterium modesticaldum (strain ATCC 51547 / Ice1) protein is Large ribosomal subunit protein uL1.